Here is a 323-residue protein sequence, read N- to C-terminus: Leukocyte surface antigen CD47 (323 aa).

The first 18 residues, 1–18, serve as a signal peptide directing secretion; it reads MWPLVAALLLGSACCGSA. Glutamine 19 carries the pyrrolidone carboxylic acid modification. The 109-residue stretch at 19–127 folds into the Ig-like V-type domain; sequence QLLFNKTKSV…ELTREGETII (109 aa). Residues 19-141 are Extracellular-facing; the sequence is QLLFNKTKSV…RVVSWFSPNE (123 aa). Residues asparagine 23, asparagine 34, asparagine 50, and asparagine 73 are each glycosylated (N-linked (GlcNAc...) asparagine). 2 cysteine pairs are disulfide-bonded: cysteine 33/cysteine 263 and cysteine 41/cysteine 114. At serine 89 the chain carries Phosphoserine. The N-linked (GlcNAc...) asparagine glycan is linked to asparagine 111. A helical membrane pass occupies residues 142–162; sequence NILIVIFPIFAILLFWGQFGI. Topologically, residues 163-176 are cytoplasmic; it reads KTLKYRSGGMDEKT. Residues 177 to 197 form a helical membrane-spanning segment; it reads IALLVAGLVITVIVIVGAILF. The Extracellular portion of the chain corresponds to 198-207; sequence VPGEYSLKNA. N-linked (GlcNAc...) asparagine glycosylation occurs at asparagine 206. A helical membrane pass occupies residues 208–228; it reads TGLGLIVTSTGILILLHYYVF. The Cytoplasmic segment spans residues 229 to 235; that stretch reads STAIGLT. Residues 236–256 form a helical membrane-spanning segment; it reads SFVIAILVIQVIAYILAVVGL. Over 257–268 the chain is Extracellular; the sequence is SLCIAACIPMHG. Residues 269–289 traverse the membrane as a helical segment; it reads PLLISGLSILALAQLLGLVYM. The Cytoplasmic segment spans residues 290-323; the sequence is KFVASNQKTIQPPRKAVEEPLNAFKESKGMMNDE.

Monomer. Interacts with THBS1 (via the C-terminal domain). Interacts with SIRPA. Interacts with FAS/CD95; interaction may be enhanced by functional activation. Interacts with SIRPG, UBQLN1 and UBQLN2. May interact with fibrinogen. Interacts with Aedes aegypti neutrophil-stimulating factor 1; the interaction results in inhibition of phagocytosis activity of macrophages. As to expression, very broadly distributed on normal adult tissues, as well as ovarian tumors, being especially abundant in some epithelia and the brain. Macrophages.

Its subcellular location is the cell membrane. In terms of biological role, adhesive protein that mediates cell-to-cell interactions. Acts as a receptor for thrombospondin THBS1 and as modulator of integrin signaling through the activation of heterotrimeric G proteins. Involved in signal transduction, cardiovascular homeostasis, inflammation, apoptosis, angiogenesis, cellular self-renewal, and immunoregulation. Plays a role in modulating pulmonary endothelin EDN1 signaling. Modulates nitrous oxide (NO) signaling, in response to THBS1, hence playing a role as a pressor agent, supporting blood pressure. Plays an important role in memory formation and synaptic plasticity in the hippocampus. Receptor for SIRPA, binding to which prevents maturation of immature dendritic cells and inhibits cytokine production by mature dendritic cells. Interaction with SIRPG mediates cell-cell adhesion, enhances superantigen-dependent T-cell-mediated proliferation and costimulates T-cell activation. Positively modulates FAS-dependent apoptosis in T-cells, perhaps by enhancing FAS clustering. Plays a role in suppressing angiogenesis and may be involved in metabolic dysregulation during normal aging. In response to THBS1, negatively modulates wound healing. Inhibits stem cell self-renewal, in response to THBS1, probably by regulation of the stem cell transcription factors POU5F1/OCT4, SOX2, MYC/c-Myc and KLF4. May play a role in membrane transport and/or integrin dependent signal transduction. May prevent premature elimination of red blood cells. The polypeptide is Leukocyte surface antigen CD47 (CD47) (Homo sapiens (Human)).